The chain runs to 116 residues: Large ribosomal subunit protein bL17 (116 aa).

Belongs to the bacterial ribosomal protein bL17 family. As to quaternary structure, part of the 50S ribosomal subunit. Contacts protein L32.

The sequence is that of Large ribosomal subunit protein bL17 from Nostoc punctiforme (strain ATCC 29133 / PCC 73102).